Here is a 362-residue protein sequence, read N- to C-terminus: Peptide chain release factor 2 (362 aa).

N5-methylglutamine is present on Gln-250.

This sequence belongs to the prokaryotic/mitochondrial release factor family. Post-translationally, methylated by PrmC. Methylation increases the termination efficiency of RF2.

The protein resides in the cytoplasm. Functionally, peptide chain release factor 2 directs the termination of translation in response to the peptide chain termination codons UGA and UAA. This chain is Peptide chain release factor 2, found in Clostridium perfringens (strain ATCC 13124 / DSM 756 / JCM 1290 / NCIMB 6125 / NCTC 8237 / Type A).